Reading from the N-terminus, the 83-residue chain is U-actitoxin-Aeq6a (83 aa).

The first 20 residues, 1-20 (MIYKAVFVCLVLVLLGDVFC), serve as a signal peptide directing secretion. Residues 21–36 (SPRNSGGGTLNDNPFE) constitute a propeptide that is removed on maturation. Pro82 carries the proline amide modification.

In terms of processing, contains 3 disulfide bonds. Expressed by acrorhagi.

The protein resides in the secreted. Its subcellular location is the nematocyst. Toxin. This Actinia equina (Beadlet anemone) protein is U-actitoxin-Aeq6a.